Here is a 112-residue protein sequence, read N- to C-terminus: Cortistatin (112 aa).

Residues 1-27 (MGGCSTRGKRPSALSLLLLLLLSGIAA) form the signal peptide. The propeptide occupies 28-81 (SALPLESGPTGQDSVQDATGGRRTGLLTFLAWWHEWASQDSSSTAFEGGTPELS). Residues 66–101 (QDSSSTAFEGGTPELSKRQERPPLQQPPHRDKKPCK) form a disordered region. Cysteine 100 and cysteine 111 are joined by a disulfide.

Belongs to the somatostatin family. Interneurons in the cerebral cortex and hippocampus.

It is found in the secreted. Functionally, neuropeptide with neuronal depressant and sleep-modulating properties. In Rattus norvegicus (Rat), this protein is Cortistatin (Cort).